We begin with the raw amino-acid sequence, 278 residues long: Pantothenate synthetase (278 aa).

Position 31 to 38 (31 to 38) interacts with ATP; sequence MGALHEGH. H38 serves as the catalytic Proton donor. Q62 lines the (R)-pantoate pocket. A beta-alanine-binding site is contributed by Q62. 148–151 is a binding site for ATP; sequence GEKD. Residue Q154 coordinates (R)-pantoate. Residues L177 and 185–188 contribute to the ATP site; that span reads MSSR.

Belongs to the pantothenate synthetase family. In terms of assembly, homodimer.

The protein resides in the cytoplasm. The catalysed reaction is (R)-pantoate + beta-alanine + ATP = (R)-pantothenate + AMP + diphosphate + H(+). Its pathway is cofactor biosynthesis; (R)-pantothenate biosynthesis; (R)-pantothenate from (R)-pantoate and beta-alanine: step 1/1. Functionally, catalyzes the condensation of pantoate with beta-alanine in an ATP-dependent reaction via a pantoyl-adenylate intermediate. The protein is Pantothenate synthetase of Acidiphilium cryptum (strain JF-5).